Consider the following 670-residue polypeptide: C6 finger domain transcription factor iacK (670 aa).

Positions 1-84 are disordered; the sequence is MNTSPDYAQP…GEPKQSGPTV (84 aa). Pro residues predominate over residues 44 to 54; that stretch reads GPPPPPPPPPT. Positions 55–74 are enriched in low complexity; the sequence is ATATAATAAATTTTAAPSAT. The zn(2)-C6 fungal-type DNA-binding region spans 88–114; that stretch reads CLACRSKHLKCDGGNPCARCQASESIC. The interval 122 to 157 is disordered; that stretch reads GYKGPRRNGTQNPNKRHAAASDDGSPNSNGSNESCP. Residues 142–155 are compositionally biased toward low complexity; the sequence is SDDGSPNSNGSNES.

It localises to the nucleus. Transcription factor; part of the gene cluster that mediates the biosynthesis of iso-A82775C, a enylepoxycyclohexane and biosynthetic precursor of the chloropestolide anticancer natural products. This is C6 finger domain transcription factor iacK from Pestalotiopsis fici (strain W106-1 / CGMCC3.15140).